We begin with the raw amino-acid sequence, 118 residues long: Small ribosomal subunit protein uS13 (118 aa).

Positions 94–118 are disordered; sequence GLPVRGQRTKTNARTRKGPRKPIKK.

This sequence belongs to the universal ribosomal protein uS13 family. In terms of assembly, part of the 30S ribosomal subunit. Forms a loose heterodimer with protein S19. Forms two bridges to the 50S subunit in the 70S ribosome.

Functionally, located at the top of the head of the 30S subunit, it contacts several helices of the 16S rRNA. In the 70S ribosome it contacts the 23S rRNA (bridge B1a) and protein L5 of the 50S subunit (bridge B1b), connecting the 2 subunits; these bridges are implicated in subunit movement. Contacts the tRNAs in the A and P-sites. The sequence is that of Small ribosomal subunit protein uS13 from Pasteurella multocida (strain Pm70).